The chain runs to 200 residues: ATP synthase subunit b 1 (200 aa).

A helical membrane pass occupies residues Ala-14–Ala-34.

Belongs to the ATPase B chain family. As to quaternary structure, F-type ATPases have 2 components, F(1) - the catalytic core - and F(0) - the membrane proton channel. F(1) has five subunits: alpha(3), beta(3), gamma(1), delta(1), epsilon(1). F(0) has three main subunits: a(1), b(2) and c(10-14). The alpha and beta chains form an alternating ring which encloses part of the gamma chain. F(1) is attached to F(0) by a central stalk formed by the gamma and epsilon chains, while a peripheral stalk is formed by the delta and b chains.

It localises to the cell inner membrane. Its function is as follows. F(1)F(0) ATP synthase produces ATP from ADP in the presence of a proton or sodium gradient. F-type ATPases consist of two structural domains, F(1) containing the extramembraneous catalytic core and F(0) containing the membrane proton channel, linked together by a central stalk and a peripheral stalk. During catalysis, ATP synthesis in the catalytic domain of F(1) is coupled via a rotary mechanism of the central stalk subunits to proton translocation. Component of the F(0) channel, it forms part of the peripheral stalk, linking F(1) to F(0). This chain is ATP synthase subunit b 1, found in Desulfosudis oleivorans (strain DSM 6200 / JCM 39069 / Hxd3) (Desulfococcus oleovorans).